The sequence spans 293 residues: Homoserine kinase (293 aa).

84-94 (PLSRGLGSSSA) is an ATP binding site.

The protein belongs to the GHMP kinase family. Homoserine kinase subfamily.

It localises to the cytoplasm. The enzyme catalyses L-homoserine + ATP = O-phospho-L-homoserine + ADP + H(+). It participates in amino-acid biosynthesis; L-threonine biosynthesis; L-threonine from L-aspartate: step 4/5. Functionally, catalyzes the ATP-dependent phosphorylation of L-homoserine to L-homoserine phosphate. The polypeptide is Homoserine kinase (Nitratiruptor sp. (strain SB155-2)).